The following is a 114-amino-acid chain: MAEITSAKAMARTVRVSPRKTRLVLDLIRGKNVADAIAILKFTPNKAARVIEKTLNSAIANAENNFGLEKANLVVSETFANEGPTMKRFRPRAKGSASPINKRTTHVTVVVSEK.

This sequence belongs to the universal ribosomal protein uL22 family. As to quaternary structure, part of the 50S ribosomal subunit.

This protein binds specifically to 23S rRNA; its binding is stimulated by other ribosomal proteins, e.g. L4, L17, and L20. It is important during the early stages of 50S assembly. It makes multiple contacts with different domains of the 23S rRNA in the assembled 50S subunit and ribosome. Its function is as follows. The globular domain of the protein is located near the polypeptide exit tunnel on the outside of the subunit, while an extended beta-hairpin is found that lines the wall of the exit tunnel in the center of the 70S ribosome. The polypeptide is Large ribosomal subunit protein uL22 (Streptococcus agalactiae serotype Ia (strain ATCC 27591 / A909 / CDC SS700)).